A 60-amino-acid chain; its full sequence is Mannitol-specific phosphotransferase enzyme IIA component (60 aa).

Positions Ser2–Asp60 constitute a PTS EIIA type-2 domain. Residue His56 is the Tele-phosphohistidine intermediate of the active site. His56 is subject to Phosphohistidine; by HPr.

Homodimer or homotrimer. Seems to be a monomer when not phosphorylated.

The protein localises to the cytoplasm. Its function is as follows. The phosphoenolpyruvate-dependent sugar phosphotransferase system (sugar PTS), a major carbohydrate active transport system, catalyzes the phosphorylation of incoming sugar substrates concomitantly with their translocation across the cell membrane. The enzyme II CmtAB PTS system is involved in D-mannitol transport. This is Mannitol-specific phosphotransferase enzyme IIA component from Staphylococcus aureus.